Reading from the N-terminus, the 25-residue chain is Galactose-binding lectin-2 (25 aa).

Homodimer. N-glycosylated.

D-galactose specific lectin. Binds in decreasing order of affinity: melibiose, N-acetyllactosamine, D-galacturonic acid, D-galactose, methyl-alpha-D-galactoside, D-galactose, methyl-alpha-D-galactopyranoside, methyl-beta-D-galactopyranoside and lactose. Binds also the glycoproteins globotriose, asialofetuin and mucin. Possesses glycan-dependent cytotoxic activity against Burkitt's lymphoma Raji cells and erythroleukemia K562 cells. Has calcium-independent hemagglutinating activity towards human erythrocytes. This Aplysia kurodai (Kuroda's sea hare) protein is Galactose-binding lectin-2.